We begin with the raw amino-acid sequence, 123 residues long: MNAVTESAATTAEMPVPFVFTDAAADKVKQLIDEEGNPDLKLRVFVQGGGCSGFQYGFTFDEEVNEDDTVMNKNGVQLLIDSMSYQYLVGAEIDYKDDLNGAQFVIKNPNATTTCGCGSSFSV.

Residues Cys51, Cys115, and Cys117 each coordinate iron-sulfur cluster.

The protein belongs to the HesB/IscA family. As to quaternary structure, homodimer. Requires iron-sulfur cluster as cofactor.

Functionally, required for insertion of 4Fe-4S clusters. The chain is Putative iron-sulfur cluster insertion protein ErpA from Burkholderia ambifaria (strain ATCC BAA-244 / DSM 16087 / CCUG 44356 / LMG 19182 / AMMD) (Burkholderia cepacia (strain AMMD)).